Consider the following 504-residue polypeptide: Sperm motility kinase 2A (504 aa).

The Protein kinase domain maps to Tyr28–Val276. ATP is bound by residues Ile34–Val42 and Lys57. Catalysis depends on Asp147, which acts as the Proton acceptor. The 41-residue stretch at Lys294–Lys334 folds into the UBA domain. 2 stretches are compositionally biased toward polar residues: residues Pro376 to Ser393 and Ser443 to Ser454. Disordered regions lie at residues Pro376–Ser403 and Ser443–Ile469.

The protein belongs to the protein kinase superfamily. CAMK Ser/Thr protein kinase family. Smok subfamily. Testis-specific. Expressed in the testis from 22 days postpartum (22 dpp).

It carries out the reaction L-seryl-[protein] + ATP = O-phospho-L-seryl-[protein] + ADP + H(+). The enzyme catalyses L-threonyl-[protein] + ATP = O-phospho-L-threonyl-[protein] + ADP + H(+). May play a role in sperm motility, especially in the regulation of flagellar function. The sequence is that of Sperm motility kinase 2A (Smok2a) from Mus musculus (Mouse).